A 192-amino-acid polypeptide reads, in one-letter code: Cell division protein SepF (192 aa).

Positions 15 to 70 are disordered; sequence GDPLEYEEDGEEYEQVYREENKREEARRATAGTAAAATPTAAAQASDAAPMGSGPA. Over residues 18 to 28 the composition is skewed to acidic residues; that stretch reads LEYEEDGEEYE. Residues 29-42 show a composition bias toward basic and acidic residues; that stretch reads QVYREENKREEARR. A compositionally biased stretch (low complexity) spans 43–63; it reads ATAGTAAAATPTAAAQASDAA.

It belongs to the SepF family. Homodimer. Interacts with FtsZ.

It is found in the cytoplasm. Its function is as follows. Cell division protein that is part of the divisome complex and is recruited early to the Z-ring. Probably stimulates Z-ring formation, perhaps through the cross-linking of FtsZ protofilaments. Its function overlaps with FtsA. The protein is Cell division protein SepF of Gloeobacter violaceus (strain ATCC 29082 / PCC 7421).